Here is a 924-residue protein sequence, read N- to C-terminus: DNA repair and recombination protein RDH54 (924 aa).

Over residues 1-10 (MQIPKYENKP) the composition is skewed to basic and acidic residues. 2 disordered regions span residues 1 to 21 (MQIP…GSNK) and 155 to 183 (EALS…NDGG). Residues 168 to 178 (TTSTTETVPST) show a composition bias toward low complexity. In terms of domain architecture, Helicase ATP-binding spans 299 to 487 (LENDSDISGC…FTIIDFINPG (189 aa)). Residue 346–353 (IPLTGLCK) participates in ATP binding. The DEGH box signature appears at 472 to 475 (NDLN). Lys-615 is covalently cross-linked (Glycyl lysine isopeptide (Lys-Gly) (interchain with G-Cter in ubiquitin)). Residues 631 to 790 (KLRVLMTLLE…DSEMRNKESS (160 aa)) enclose the Helicase C-terminal domain.

The protein belongs to the SNF2/RAD54 helicase family. Interacts with RAD51 and DMC1.

The protein resides in the nucleus. It carries out the reaction ATP + H2O = ADP + phosphate + H(+). Involved in the recombinational repair of double-strand breaks (DSB) in DNA during mitosis and meiosis. Has DNA dependent ATPase activity. Promotes D-loop (displacement loop) formation with RAD51 recombinase. Modifies the topology of double-stranded DNA during the D-loop reaction to facilitate the invasion of the homologous duplex molecule by the initiating single-stranded DNA substrate. Required for adaptation from G2/M checkpoint arrest induced by a double strand break, by participating in monitoring the extent of single-stranded DNA produced by resection of DNA ends. This role is distinct from its roles in recombination. Promotes colocalization of RAD51 and DMC1 during meiotic recombination. Involved in crossover interference. The protein is DNA repair and recombination protein RDH54 (RDH54) of Saccharomyces cerevisiae (strain RM11-1a) (Baker's yeast).